The chain runs to 380 residues: Queuine tRNA-ribosyltransferase (380 aa).

D96 (proton acceptor) is an active-site residue. Substrate is bound by residues D96–F100, D150, Q193, and G220. An RNA binding region spans residues G251–S257. The Nucleophile role is filled by D270. The tract at residues T275–R279 is RNA binding; important for wobble base 34 recognition. Residues C308, C310, C313, and H339 each contribute to the Zn(2+) site.

Belongs to the queuine tRNA-ribosyltransferase family. Homodimer. Within each dimer, one monomer is responsible for RNA recognition and catalysis, while the other monomer binds to the replacement base PreQ1. The cofactor is Zn(2+).

The enzyme catalyses 7-aminomethyl-7-carbaguanine + guanosine(34) in tRNA = 7-aminomethyl-7-carbaguanosine(34) in tRNA + guanine. It participates in tRNA modification; tRNA-queuosine biosynthesis. Functionally, catalyzes the base-exchange of a guanine (G) residue with the queuine precursor 7-aminomethyl-7-deazaguanine (PreQ1) at position 34 (anticodon wobble position) in tRNAs with GU(N) anticodons (tRNA-Asp, -Asn, -His and -Tyr). Catalysis occurs through a double-displacement mechanism. The nucleophile active site attacks the C1' of nucleotide 34 to detach the guanine base from the RNA, forming a covalent enzyme-RNA intermediate. The proton acceptor active site deprotonates the incoming PreQ1, allowing a nucleophilic attack on the C1' of the ribose to form the product. After dissociation, two additional enzymatic reactions on the tRNA convert PreQ1 to queuine (Q), resulting in the hypermodified nucleoside queuosine (7-(((4,5-cis-dihydroxy-2-cyclopenten-1-yl)amino)methyl)-7-deazaguanosine). This chain is Queuine tRNA-ribosyltransferase, found in Streptococcus pneumoniae (strain Hungary19A-6).